A 116-amino-acid chain; its full sequence is Antimicrobial peptide 1b (116 aa).

A signal peptide spans 1–34 (MKPHMSATVLRAPRVAAILLAVVLAAVLATAVNG). The 43-residue stretch at 35–77 (AQRCGDQARGAKCPNCLCCGKYGFCGSGDAYCGAGSCQSQCRG) folds into the Chitin-binding type-1 domain. Disulfide bonds link Cys-38–Cys-53, Cys-47–Cys-59, Cys-50–Cys-78, Cys-52–Cys-66, and Cys-71–Cys-75. Positions 80–116 (DDVVGQALPAEPGSTRATAASSASARGLNLTATTGGP) are excised as a propeptide. The segment at 89–116 (AEPGSTRATAASSASARGLNLTATTGGP) is disordered. Low complexity predominate over residues 93–105 (STRATAASSASAR).

Functionally, binds chitin. Has antifungal activity against the fungi F.solani (IC(50)=5 ug/ml), F.verticillioides (IC(50)=30 ug/ml), F.oxysporum (IC(50)=5 ug/ml), B.sorokiniana (IC(50)=5 ug/ml), B.cinerea (IC(50)=20 ug/ml) and N.crassa (IC(50)=10 ug/ml). Inhibits hyphal elongation and causes browning of hyphae in F.oxysporum. Causes destruction and discoloration of spores in B.sorokiniana. Inhibits the development of disease caused by the fungus P.infestans on potato tubers. Has antibacterial activity against the Gram-negative bacteria P.syringae and E.carotovora, and the Gram-positive bacterium C.michiganensis. In terms of biological role, has antifungal activity against F.verticillioides (IC(50)=2.7 ug/ml). At concentrations between 45 uM and 225 uM, inhibits activity of metalloproteinase fungalysin Fv-cpm from F.verticillioides. The sequence is that of Antimicrobial peptide 1b from Triticum kiharae (Wheat).